The chain runs to 171 residues: S-ribosylhomocysteine lyase (171 aa).

Residues histidine 54, histidine 58, and cysteine 128 each contribute to the Fe cation site.

This sequence belongs to the LuxS family. Homodimer. Requires Fe cation as cofactor.

It catalyses the reaction S-(5-deoxy-D-ribos-5-yl)-L-homocysteine = (S)-4,5-dihydroxypentane-2,3-dione + L-homocysteine. Involved in the synthesis of autoinducer 2 (AI-2) which is secreted by bacteria and is used to communicate both the cell density and the metabolic potential of the environment. The regulation of gene expression in response to changes in cell density is called quorum sensing. Catalyzes the transformation of S-ribosylhomocysteine (RHC) to homocysteine (HC) and 4,5-dihydroxy-2,3-pentadione (DPD). The polypeptide is S-ribosylhomocysteine lyase (Campylobacter curvus (strain 525.92)).